We begin with the raw amino-acid sequence, 277 residues long: Large ribosomal subunit protein uL2 (277 aa).

Positions 222-259 (GSVMNPNDHPHGGGEGKSPVGRPSPVTPWGKPALGYKT) are disordered.

This sequence belongs to the universal ribosomal protein uL2 family. As to quaternary structure, part of the 50S ribosomal subunit. Forms a bridge to the 30S subunit in the 70S ribosome.

Its function is as follows. One of the primary rRNA binding proteins. Required for association of the 30S and 50S subunits to form the 70S ribosome, for tRNA binding and peptide bond formation. It has been suggested to have peptidyltransferase activity; this is somewhat controversial. Makes several contacts with the 16S rRNA in the 70S ribosome. In Clostridium beijerinckii (strain ATCC 51743 / NCIMB 8052) (Clostridium acetobutylicum), this protein is Large ribosomal subunit protein uL2.